Reading from the N-terminus, the 1354-residue chain is Eukaryotic translation initiation factor 3 subunit A (1354 aa).

At lysine 68 the chain carries N6-acetyllysine. Residues 82–120 (NIKSLEDVVRAYLKLAEEKTEAAKEESQQMVLDIEDLDN) adopt a coiled-coil conformation. The 184-residue stretch at 315–498 (MQRMSTRVLL…RTLSFGSDLN (184 aa)) folds into the PCI domain. 2 positions are modified to phosphoserine: serine 492 and serine 584. The interaction with EIF3B stretch occupies residues 664–835 (LDPDFIMAKQ…REERERAERA (172 aa)). 3 disordered regions span residues 809–844 (EKEE…LREY), 866–1249 (EERE…RDRD), and 1262–1354 (DLRD…TVRR). Basic and acidic residues-rich tracts occupy residues 866–1136 (EERE…DDAR), 1148–1249 (GWRE…RDRD), 1262–1302 (DLRD…DPPR), and 1310–1343 (SRER…TKNE). Serine 895 is modified (phosphoserine). One copy of the 1; truncated repeat lies at 924–931 (DDERPHRR). The 22 X 10 AA approximate tandem repeats of [DA]-[DE]-[ED]-R-[PLIGFSV]-[RPS]-[RW]-[RL]-[GNIHT]-[DGLPTAM] stretch occupies residues 924–1143 (DDERPHRRDE…DARPGPWRPF (220 aa)). Residues 932–941 (DEDRLRRLGG) form repeat 2. The 3; approximate repeat unit spans residues 942–951 (DDEERESSLR). Serine 949 bears the Phosphoserine mark. Tandem repeats lie at residues 953–962 (DDDRIPRRGL), 963–972 (DDDRGPRRGP), 973–982 (DEDRFSRRGT), 983–992 (DDDRPSWRNA), 993–1002 (DDDRPPRRIG), 1003–1012 (DDDRGSWRHT), 1013–1022 (DDDRPPRRGL), 1023–1032 (DDDRPPRRGL), 1033–1042 (DDERGSWRTA), 1043–1052 (EEDRGPRRGM), 1053–1062 (DDDRGPRRGG), 1064–1073 (DDERSSWRNA), 1074–1083 (DDDRGPRRGM), 1084–1093 (DDDRGPRRGL), 1094–1103 (DDDRGPWRNA), 1104–1113 (AEDRISRRGA), 1114–1123 (DDDRGPWRNM), and 1124–1133 (DDDRVPRRGD). A Phosphoserine modification is found at serine 1038. The 22; approximate repeat unit spans residues 1134 to 1143 (DARPGPWRPF). Residues serine 1159 and serine 1233 each carry the phosphoserine modification. Phosphoserine occurs at positions 1310 and 1336.

Belongs to the eIF-3 subunit A family. As to quaternary structure, component of the eukaryotic translation initiation factor 3 (eIF-3) complex, which is composed of 13 subunits: EIF3A, EIF3B, EIF3C, EIF3D, EIF3E, EIF3F, EIF3G, EIF3H, EIF3I, EIF3J, EIF3K, EIF3L and EIF3M. The eIF-3 complex appears to include 3 stable modules: module A is composed of EIF3A, EIF3B, EIF3G and EIF3I; module B is composed of EIF3F, EIF3H, and EIF3M; and module C is composed of EIF3C, EIF3D, EIF3E, EIF3L and EIF3K. EIF3C of module C binds EIF3B of module A and EIF3H of module B, thereby linking the three modules. EIF3J is a labile subunit that binds to the eIF-3 complex via EIF3B. The eIF-3 complex interacts with RPS6KB1 under conditions of nutrient depletion. Mitogenic stimulation leads to binding and activation of a complex composed of MTOR and RPTOR, leading to phosphorylation and release of RPS6KB1 and binding of EIF4B to eIF-3. Interacts with EIF4G1. Also interacts with KRT7 and PIWIL2. Post-translationally, phosphorylated. Phosphorylation is enhanced upon serum stimulation.

Its subcellular location is the cytoplasm. In terms of biological role, RNA-binding component of the eukaryotic translation initiation factor 3 (eIF-3) complex, which is required for several steps in the initiation of protein synthesis. The eIF-3 complex associates with the 40S ribosome and facilitates the recruitment of eIF-1, eIF-1A, eIF-2:GTP:methionyl-tRNAi and eIF-5 to form the 43S pre-initiation complex (43S PIC). The eIF-3 complex stimulates mRNA recruitment to the 43S PIC and scanning of the mRNA for AUG recognition. The eIF-3 complex is also required for disassembly and recycling of post-termination ribosomal complexes and subsequently prevents premature joining of the 40S and 60S ribosomal subunits prior to initiation. The eIF-3 complex specifically targets and initiates translation of a subset of mRNAs involved in cell proliferation, including cell cycling, differentiation and apoptosis, and uses different modes of RNA stem-loop binding to exert either translational activation or repression. The chain is Eukaryotic translation initiation factor 3 subunit A (Eif3a) from Rattus norvegicus (Rat).